The primary structure comprises 181 residues: Small ribosomal subunit protein bS16 (181 aa).

The disordered stretch occupies residues 150-181 (KKAAEEAAKAAAEAPAEEAAPAEEAATEAAAE). Residues 158 to 181 (KAAAEAPAEEAAPAEEAATEAAAE) show a composition bias toward low complexity.

It belongs to the bacterial ribosomal protein bS16 family.

The sequence is that of Small ribosomal subunit protein bS16 from Bacteroides fragilis (strain ATCC 25285 / DSM 2151 / CCUG 4856 / JCM 11019 / LMG 10263 / NCTC 9343 / Onslow / VPI 2553 / EN-2).